Reading from the N-terminus, the 219-residue chain is Small ribosomal subunit protein uS3 (219 aa).

Residues 38-106 (IRKYINTKLA…KVHINIVEIK (69 aa)) form the KH type-2 domain.

It belongs to the universal ribosomal protein uS3 family. As to quaternary structure, part of the 30S ribosomal subunit. Forms a tight complex with proteins S10 and S14.

Binds the lower part of the 30S subunit head. Binds mRNA in the 70S ribosome, positioning it for translation. The polypeptide is Small ribosomal subunit protein uS3 (Latilactobacillus sakei subsp. sakei (strain 23K) (Lactobacillus sakei subsp. sakei)).